The following is a 296-amino-acid chain: Cytidine deaminase (296 aa).

2 consecutive CMP/dCMP-type deaminase domains span residues 47–167 (AESE…FGPS) and 186–296 (DSSD…LDPE). 88 to 90 (NME) lines the substrate pocket. Histidine 101 is a Zn(2+) binding site. Catalysis depends on glutamate 103, which acts as the Proton donor. Zn(2+) is bound by residues cysteine 128 and cysteine 131.

The protein belongs to the cytidine and deoxycytidylate deaminase family. Homodimer. It depends on Zn(2+) as a cofactor.

It catalyses the reaction cytidine + H2O + H(+) = uridine + NH4(+). The enzyme catalyses 2'-deoxycytidine + H2O + H(+) = 2'-deoxyuridine + NH4(+). This enzyme scavenges exogenous and endogenous cytidine and 2'-deoxycytidine for UMP synthesis. The chain is Cytidine deaminase from Shewanella sediminis (strain HAW-EB3).